The chain runs to 556 residues: 2-isopropylmalate synthase (556 aa).

Residues 33 to 307 form the Pyruvate carboxyltransferase domain; the sequence is PIWCSSDLRD…NPELDFSDID (275 aa). D42, H246, H248, and N282 together coordinate Mg(2+). Residues 439 to 556 are regulatory domain; the sequence is ANTPYALISH…SLSQAQAKAA (118 aa).

It belongs to the alpha-IPM synthase/homocitrate synthase family. LeuA type 2 subfamily. In terms of assembly, homodimer. The cofactor is Mg(2+).

It localises to the cytoplasm. It carries out the reaction 3-methyl-2-oxobutanoate + acetyl-CoA + H2O = (2S)-2-isopropylmalate + CoA + H(+). The protein operates within amino-acid biosynthesis; L-leucine biosynthesis; L-leucine from 3-methyl-2-oxobutanoate: step 1/4. Its function is as follows. Catalyzes the condensation of the acetyl group of acetyl-CoA with 3-methyl-2-oxobutanoate (2-ketoisovalerate) to form 3-carboxy-3-hydroxy-4-methylpentanoate (2-isopropylmalate). This chain is 2-isopropylmalate synthase, found in Pseudomonas syringae pv. tomato (strain ATCC BAA-871 / DC3000).